The primary structure comprises 296 residues: 33 kDa chaperonin (296 aa).

Disulfide bonds link C233/C235 and C267/C270.

The protein belongs to the HSP33 family. Under oxidizing conditions two disulfide bonds are formed involving the reactive cysteines. Under reducing conditions zinc is bound to the reactive cysteines and the protein is inactive.

The protein resides in the cytoplasm. In terms of biological role, redox regulated molecular chaperone. Protects both thermally unfolding and oxidatively damaged proteins from irreversible aggregation. Plays an important role in the bacterial defense system toward oxidative stress. This chain is 33 kDa chaperonin, found in Actinobacillus pleuropneumoniae serotype 7 (strain AP76).